The chain runs to 999 residues: Sarcoplasmic/endoplasmic reticulum calcium ATPase 3 (999 aa).

Met-1 is subject to N-acetylmethionine. At 1-48 the chain is on the cytoplasmic side; it reads MEAAHLLPAADVLRHFSVTAEGGLSPAQVTGARERYGPNELPSEEGKS. Ser-17 carries the post-translational modification Phosphoserine. At Thr-19 the chain carries Phosphothreonine. Phosphoserine is present on Ser-25. A helical transmembrane segment spans residues 49 to 69; sequence LWELVLEQFEDLLVRILLLAA. Over 70-89 the chain is Lumenal; the sequence is LVSFVLAWFEEGEETTTAFV. The chain crosses the membrane as a helical span at residues 90 to 110; sequence EPLVIMLILVANAIVGVWQER. Over 111 to 253 the chain is Cytoplasmic; the sequence is NAESAIEALK…PERTPLQRKL (143 aa). A helical transmembrane segment spans residues 254 to 273; sequence DEFGRQLSHAISVICVAVWV. Residues 274 to 295 are Lumenal-facing; sequence INIGHFADPAHGGSWLRGAVYY. A helical membrane pass occupies residues 296 to 313; sequence FKIAVALAVAAIPEGLPA. Val-304, Ala-305, Ile-307, and Glu-309 together coordinate Ca(2+). The Cytoplasmic portion of the chain corresponds to 314 to 757; that stretch reads VITTCLALGT…EEGRAIYSNM (444 aa). Asp-351 acts as the 4-aspartylphosphate intermediate in catalysis. Residues Asp-351 and Thr-353 each contribute to the Mg(2+) site. Position 353 (Thr-353) interacts with ATP. The tract at residues 370 to 400 is interaction with phospholamban 1; the sequence is AEADAGSCLLHEFTISGTTYTPEGEVRQGDQ. Thr-415 is subject to Phosphothreonine. Glu-442, Arg-489, Lys-515, Arg-560, Thr-625, Gly-626, and Asp-627 together coordinate ATP. Ser-662 is subject to Phosphoserine. ATP-binding residues include Arg-678 and Lys-684. Position 703 (Asp-703) interacts with Mg(2+). Asn-706 provides a ligand contact to ATP. A helical membrane pass occupies residues 758 to 777; that stretch reads KQFIRYLISSNVGEVVCIFL. Ca(2+) contacts are provided by Asn-768 and Glu-771. The Lumenal portion of the chain corresponds to 778–787; it reads TAILGLPEAL. Residues 788-808 traverse the membrane as a helical segment; the sequence is IPVQLLWVNLVTDGLPATALG. The segment at 788 to 808 is interaction with phospholamban 2; that stretch reads IPVQLLWVNLVTDGLPATALG. Ca(2+)-binding residues include Asn-796, Thr-799, and Asp-800. Residues 809–828 are Cytoplasmic-facing; it reads FNPPDLDIMEKLPRSPREAL. A helical membrane pass occupies residues 829 to 851; the sequence is ISGWLFFRYLAIGVYVGLATVAA. The Lumenal segment spans residues 852 to 897; it reads ATWWFVYDAEGPHINFYQLRNFLKCSEDNPLFAGIDCEVFESRFPT. The helical transmembrane segment at 898-917 threads the bilayer; it reads TMALSVLVTIEMCNALNSVS. Glu-908 is a binding site for Ca(2+). Residues 918-930 lie on the Cytoplasmic side of the membrane; sequence ENQSLLRMPPWMN. Residues 931-949 traverse the membrane as a helical segment; it reads PWLLVAVAMSMALHFLILL. Residues 950–964 are Lumenal-facing; it reads VPPLPLIFQVTPLSG. The helical transmembrane segment at 965 to 985 threads the bilayer; it reads RQWVVVLQISLPVILLDEALK. Residues 986 to 999 lie on the Cytoplasmic side of the membrane; sequence YLSRNHMHEEMSQK.

The protein belongs to the cation transport ATPase (P-type) (TC 3.A.3) family. Type IIA subfamily. Interacts with sarcolipin (SLN). Interacts with phospholamban (PLN). Interacts with myoregulin (MRLN). Interacts with DWORF. Interacts with VMP1. Interacts with TUNAR; the interaction occurs at low levels in low glucose conditions and is increased by high glucose levels. Requires Mg(2+) as cofactor. As to expression, found in most tissues. Most abundant in thymus, trachea, salivary gland, spleen, bone marrow, lymph node, peripheral leukocytes, pancreas and colon. Also detected in fetal tissues. Expressed in cell lineages of hematopoietic, epithelial, or embryonic origin and also expressed in several cancer cell lines.

Its subcellular location is the nucleus membrane. It localises to the endoplasmic reticulum membrane. The protein resides in the sarcoplasmic reticulum membrane. The enzyme catalyses Ca(2+)(in) + ATP + H2O = Ca(2+)(out) + ADP + phosphate + H(+). With respect to regulation, inhibited by sarcolipin (SLN), phospholamban (PLN) and myoregulin (MRLN). Enhanced by DWORF; DWORF increases activity by displacing sarcolipin (SLN), phospholamban (PLN) and myoregulin (MRLN). This magnesium-dependent enzyme catalyzes the hydrolysis of ATP coupled with the transport of calcium. Transports calcium ions from the cytosol into the sarcoplasmic/endoplasmic reticulum lumen. Contributes to calcium sequestration involved in muscular excitation/contraction. The sequence is that of Sarcoplasmic/endoplasmic reticulum calcium ATPase 3 from Homo sapiens (Human).